Consider the following 145-residue polypeptide: Anaerobic nitrite reductase NSHB5 (145 aa).

One can recognise a Globin domain in the interval 2 to 142 (GFSETQEELV…LAAAIKEEMK (141 aa)). Residues 35-39 (EIAPA) carry the Homodimerization motif. 6 residues coordinate heme b: Ser45, His59, Lys61, Arg84, Thr88, and His89. A Homodimerization motif is present at residues 96-108 (DAYFEVVKTALLD).

Belongs to the plant globin family. In terms of assembly, homodimer. Heme b is required as a cofactor. As to expression, expressed in embryonic (embryos, coleoptiles and seminal roots) and vegetative (leaves and roots) organs.

Its subcellular location is the cytoplasm. It localises to the nucleus. It carries out the reaction Fe(III)-heme b-[protein] + nitric oxide + H2O = Fe(II)-heme b-[protein] + nitrite + 2 H(+). In terms of biological role, phytoglobin that reduces nitrite to nitric oxide under anoxic conditions (e.g. during flooding or in waterlogged soil). May not function as an oxygen storage or transport protein. Has an unusually high affinity for O(2) through an hexacoordinate heme iron because of a very low dissociation constant. The sequence is that of Anaerobic nitrite reductase NSHB5 from Oryza sativa subsp. japonica (Rice).